The sequence spans 169 residues: MEIGQYQPNLEGDGLRIGIVQSRFNEPVCNGLADACVEELERLGVSGEDVLLVSVPGALEIPLALQKLAESGQFDALIALGAVIRGETYHFELVSNESGAGITRIGLDFNLPIANAVLTTENDEQAVARMTEKGRDAARVAVEMANLTMALDQLGDDEEEDEDDEEERA.

5-amino-6-(D-ribitylamino)uracil contacts are provided by residues Phe24, 58 to 60, and 82 to 84; these read ALE and AVI. 87–88 is a binding site for (2S)-2-hydroxy-3-oxobutyl phosphate; that stretch reads ET. His90 (proton donor) is an active-site residue. Asn115 is a binding site for 5-amino-6-(D-ribitylamino)uracil. Residue Arg129 coordinates (2S)-2-hydroxy-3-oxobutyl phosphate.

The protein belongs to the DMRL synthase family.

The catalysed reaction is (2S)-2-hydroxy-3-oxobutyl phosphate + 5-amino-6-(D-ribitylamino)uracil = 6,7-dimethyl-8-(1-D-ribityl)lumazine + phosphate + 2 H2O + H(+). The protein operates within cofactor biosynthesis; riboflavin biosynthesis; riboflavin from 2-hydroxy-3-oxobutyl phosphate and 5-amino-6-(D-ribitylamino)uracil: step 1/2. In terms of biological role, catalyzes the formation of 6,7-dimethyl-8-ribityllumazine by condensation of 5-amino-6-(D-ribitylamino)uracil with 3,4-dihydroxy-2-butanone 4-phosphate. This is the penultimate step in the biosynthesis of riboflavin. This Burkholderia vietnamiensis (strain G4 / LMG 22486) (Burkholderia cepacia (strain R1808)) protein is 6,7-dimethyl-8-ribityllumazine synthase.